A 358-amino-acid chain; its full sequence is Testis-specific serine/threonine-protein kinase 2 (358 aa).

The region spanning Tyr12–Leu272 is the Protein kinase domain. ATP contacts are provided by residues Leu18 to Val26 and Lys41. Catalysis depends on Asp136, which acts as the Proton acceptor. Composition is skewed to basic and acidic residues over residues Asp296–Leu315 and Asn329–Thr358. The interval Asp296–Thr358 is disordered.

This sequence belongs to the protein kinase superfamily. CAMK Ser/Thr protein kinase family. In terms of assembly, interacts with TSSK1B. Interacts with HSP90; this interaction stabilizes TSSK2. It depends on Mg(2+) as a cofactor. Autophosphorylated. In terms of processing, ubiquitinated; HSP90 activity negatively regulates ubiquitination and degradation. As to expression, testis-specific. Expressed only in the spermatids postmeiotically at the final stages of cytodifferentiation in the seminiferous tubules (at protein level). Not detected in released sperms in the lumen of the seminiferous tubules. Also present in the epididymal sperm (at protein level).

Its subcellular location is the cytoplasm. It localises to the cytoskeleton. The protein resides in the microtubule organizing center. The protein localises to the centrosome. It is found in the centriole. Its subcellular location is the cytoplasmic vesicle. It localises to the secretory vesicle. The protein resides in the acrosome. The enzyme catalyses L-seryl-[protein] + ATP = O-phospho-L-seryl-[protein] + ADP + H(+). The catalysed reaction is L-threonyl-[protein] + ATP = O-phospho-L-threonyl-[protein] + ADP + H(+). With respect to regulation, activated by phosphorylation on Thr-174, potentially by autophosphorylation. Testis-specific serine/threonine-protein kinase required during spermatid development. Phosphorylates 'Ser-281' of TSKS and SPAG16. Involved in the late stages of spermatogenesis, during the reconstruction of the cytoplasm. During spermatogenesis, required for the transformation of a ring-shaped structure around the base of the flagellum originating from the chromatoid body. In Mus musculus (Mouse), this protein is Testis-specific serine/threonine-protein kinase 2 (Tssk2).